We begin with the raw amino-acid sequence, 485 residues long: Chromosomal replication initiator protein DnaA (485 aa).

The segment at methionine 1 to valine 74 is domain I, interacts with DnaA modulators. The tract at residues valine 74 to proline 140 is domain II. The domain III, AAA+ region stretch occupies residues phenylalanine 141–isoleucine 357. Residues glycine 185, glycine 187, lysine 188, and threonine 189 each contribute to the ATP site. Positions aspartate 358–asparagine 485 are domain IV, binds dsDNA.

Belongs to the DnaA family. As to quaternary structure, oligomerizes as a right-handed, spiral filament on DNA at oriC.

The protein resides in the cytoplasm. Functionally, plays an essential role in the initiation and regulation of chromosomal replication. ATP-DnaA binds to the origin of replication (oriC) to initiate formation of the DNA replication initiation complex once per cell cycle. Binds the DnaA box (a 9 base pair repeat at the origin) and separates the double-stranded (ds)DNA. Forms a right-handed helical filament on oriC DNA; dsDNA binds to the exterior of the filament while single-stranded (ss)DNA is stabiized in the filament's interior. The ATP-DnaA-oriC complex binds and stabilizes one strand of the AT-rich DNA unwinding element (DUE), permitting loading of DNA polymerase. After initiation quickly degrades to an ADP-DnaA complex that is not apt for DNA replication. Binds acidic phospholipids. The polypeptide is Chromosomal replication initiator protein DnaA (Borreliella afzelii (strain PKo) (Borrelia afzelii)).